We begin with the raw amino-acid sequence, 489 residues long: Aklavinone 12-hydroxylase DnrF (489 aa).

FAD contacts are provided by residues 17–18 (LG), glutamate 37, glutamine 121, and leucine 145. The active-site Proton acceptor is the tyrosine 224. Aspartate 308 is a binding site for FAD. Position 317 (glycine 317) interacts with aklavinone. The segment at 402–428 (VAAEDDDPEPTEDPRRPSGRPGFRAPH) is disordered.

It belongs to the PheA/TfdB FAD monooxygenase family. In terms of assembly, monomer. Requires FAD as cofactor.

It catalyses the reaction aklavinone + NADPH + O2 + H(+) = epsilon-rhodomycinone + NADP(+) + H2O. The protein operates within antibiotic biosynthesis; daunorubicin biosynthesis. It functions in the pathway antibiotic biosynthesis; carminomycin biosynthesis. It participates in antibiotic biosynthesis; rhodomycin biosynthesis. Its pathway is antibiotic biosynthesis; doxorubicin biosynthesis. Its function is as follows. Involved in the biosynthesis of the anthracyclines carminomycin, rhodomycin, daunorubicin (daunomycin) and doxorubicin (adriamycin) which are aromatic polyketide antibiotics that exhibit high cytotoxicity and are widely applied in the chemotherapy of a variety of cancers. Catalyzes the incorporation of a hydroxyl group at position C-11 of aklavinone, resulting in epsilon-rhodomycinone. In Streptomyces peucetius subsp. caesius, this protein is Aklavinone 12-hydroxylase DnrF (dnrF).